Reading from the N-terminus, the 475-residue chain is Ribulose bisphosphate carboxylase large chain (475 aa).

A propeptide spanning residues 1–2 (MS) is cleaved from the precursor. Position 3 is an N-acetylproline (proline 3). The residue at position 14 (lysine 14) is an N6,N6,N6-trimethyllysine. Asparagine 123 and threonine 173 together coordinate substrate. Residue lysine 175 is the Proton acceptor of the active site. Lysine 177 serves as a coordination point for substrate. The Mg(2+) site is built by lysine 201, aspartate 203, and glutamate 204. N6-carboxylysine is present on lysine 201. Histidine 294 (proton acceptor) is an active-site residue. Positions 295, 327, and 379 each coordinate substrate.

This sequence belongs to the RuBisCO large chain family. Type I subfamily. As to quaternary structure, heterohexadecamer of 8 large chains and 8 small chains; disulfide-linked. The disulfide link is formed within the large subunit homodimers. The cofactor is Mg(2+). In terms of processing, the disulfide bond which can form in the large chain dimeric partners within the hexadecamer appears to be associated with oxidative stress and protein turnover.

Its subcellular location is the plastid. It is found in the chloroplast. The catalysed reaction is 2 (2R)-3-phosphoglycerate + 2 H(+) = D-ribulose 1,5-bisphosphate + CO2 + H2O. It carries out the reaction D-ribulose 1,5-bisphosphate + O2 = 2-phosphoglycolate + (2R)-3-phosphoglycerate + 2 H(+). Its function is as follows. RuBisCO catalyzes two reactions: the carboxylation of D-ribulose 1,5-bisphosphate, the primary event in carbon dioxide fixation, as well as the oxidative fragmentation of the pentose substrate in the photorespiration process. Both reactions occur simultaneously and in competition at the same active site. This is Ribulose bisphosphate carboxylase large chain from Corylus cornuta (Beaked hazel).